The sequence spans 118 residues: Cell division topological specificity factor (118 aa).

Positions 86–118 are disordered; it reads RSQAKAVSSQENGASSQEAVSSQESVSTPGAME. A compositionally biased stretch (low complexity) spans 99–112; the sequence is ASSQEAVSSQESVS.

Belongs to the MinE family.

Prevents the cell division inhibition by proteins MinC and MinD at internal division sites while permitting inhibition at polar sites. This ensures cell division at the proper site by restricting the formation of a division septum at the midpoint of the long axis of the cell. This is Cell division topological specificity factor from Prochlorococcus marinus (strain MIT 9313).